Reading from the N-terminus, the 182-residue chain is ATP synthase subunit delta (182 aa).

This sequence belongs to the ATPase delta chain family. As to quaternary structure, F-type ATPases have 2 components, F(1) - the catalytic core - and F(0) - the membrane proton channel. F(1) has five subunits: alpha(3), beta(3), gamma(1), delta(1), epsilon(1). F(0) has three main subunits: a(1), b(2) and c(10-14). The alpha and beta chains form an alternating ring which encloses part of the gamma chain. F(1) is attached to F(0) by a central stalk formed by the gamma and epsilon chains, while a peripheral stalk is formed by the delta and b chains.

It localises to the cell inner membrane. In terms of biological role, f(1)F(0) ATP synthase produces ATP from ADP in the presence of a proton or sodium gradient. F-type ATPases consist of two structural domains, F(1) containing the extramembraneous catalytic core and F(0) containing the membrane proton channel, linked together by a central stalk and a peripheral stalk. During catalysis, ATP synthesis in the catalytic domain of F(1) is coupled via a rotary mechanism of the central stalk subunits to proton translocation. Its function is as follows. This protein is part of the stalk that links CF(0) to CF(1). It either transmits conformational changes from CF(0) to CF(1) or is implicated in proton conduction. This Pseudothermotoga lettingae (strain ATCC BAA-301 / DSM 14385 / NBRC 107922 / TMO) (Thermotoga lettingae) protein is ATP synthase subunit delta.